A 134-amino-acid polypeptide reads, in one-letter code: Cytochrome b5 (134 aa).

N-acetylalanine is present on Ala-2. An N6-acetyllysine mark is found at Lys-7, Lys-10, and Lys-19. Residues 9–85 (VKYYTLEEIK…SKTFIIGELH (77 aa)) form the Cytochrome b5 heme-binding domain. 2 residues coordinate heme: His-44 and His-68. Residues 109–131 (WWTNWVIPAISALIVALMYRLYM) form a helical membrane-spanning segment.

It belongs to the cytochrome b5 family.

It localises to the endoplasmic reticulum membrane. The protein resides in the microsome membrane. Its function is as follows. Cytochrome b5 is a membrane-bound hemoprotein functioning as an electron carrier for several membrane-bound oxygenases. The polypeptide is Cytochrome b5 (CYB5A) (Oryctolagus cuniculus (Rabbit)).